We begin with the raw amino-acid sequence, 348 residues long: 4-hydroxy-2-oxovalerate aldolase 3 (348 aa).

Positions 8-260 (ITVHDMTLRD…ETGVDVWKIQ (253 aa)) constitute a Pyruvate carboxyltransferase domain. 16-17 (RD) is a substrate binding site. D17 provides a ligand contact to Mn(2+). H20 serves as the catalytic Proton acceptor. S170 and H199 together coordinate substrate. Residues H199 and H201 each contribute to the Mn(2+) site. Residue Y290 participates in substrate binding.

Belongs to the 4-hydroxy-2-oxovalerate aldolase family.

It carries out the reaction (S)-4-hydroxy-2-oxopentanoate = acetaldehyde + pyruvate. This Burkholderia lata (strain ATCC 17760 / DSM 23089 / LMG 22485 / NCIMB 9086 / R18194 / 383) protein is 4-hydroxy-2-oxovalerate aldolase 3.